We begin with the raw amino-acid sequence, 256 residues long: Imidazole glycerol phosphate synthase subunit HisF (256 aa).

Active-site residues include D12 and D131.

This sequence belongs to the HisA/HisF family. As to quaternary structure, heterodimer of HisH and HisF.

It localises to the cytoplasm. It carries out the reaction 5-[(5-phospho-1-deoxy-D-ribulos-1-ylimino)methylamino]-1-(5-phospho-beta-D-ribosyl)imidazole-4-carboxamide + L-glutamine = D-erythro-1-(imidazol-4-yl)glycerol 3-phosphate + 5-amino-1-(5-phospho-beta-D-ribosyl)imidazole-4-carboxamide + L-glutamate + H(+). It participates in amino-acid biosynthesis; L-histidine biosynthesis; L-histidine from 5-phospho-alpha-D-ribose 1-diphosphate: step 5/9. Its function is as follows. IGPS catalyzes the conversion of PRFAR and glutamine to IGP, AICAR and glutamate. The HisF subunit catalyzes the cyclization activity that produces IGP and AICAR from PRFAR using the ammonia provided by the HisH subunit. This is Imidazole glycerol phosphate synthase subunit HisF from Thermobifida fusca (strain YX).